Reading from the N-terminus, the 725-residue chain is MSASDLTSVQAGAPQGRRQILVTSALPYANGQIHIGHLVEYIQTDIWVRTMRMHGHEIYYIGADDTHGTPVMLRAEQEGVSPKQLIERVWREHKRDFDSFGVSFDNFYTTDSDENRVLSETIYLALKEAGFIAEREIEQAYDPVRQMFLPDRFIKGECPKCHAKDQYGDSCEVCGTTYQPTDLIHPYSVVSGAAPVRKTSTHYFFRLSDPRCEAFLREWVSGLAQPEATNKMREWLGEAGEAKLADWDISRDAPYFGFEIPGAPGKYFYVWLDAPVGYYASFKNLCQRRGLDFDAWIRKDSTTEQYHFIGKDILYFHTLFWPAMLEFSGHRTPTNVFAHGFLTVDGAKMSKSRGTFITAQSYIDTGLNPEWLRYYFAAKLNATMEDIDLNLEDFQARVNSDLVGKYVNIASRAAGFLLKRFDGRVQASAMNHPLLATLRGAIPQIAAHYEAREYGRALRQTMELADAVNGYVDSAKPWELAKDPANAVALHETCSVSLEAFRLLSLALKPVLPRVAQGVEAFLGIAPLTWADAGTPLSPEQPVRAYQHLMTRVDPKQIDALLAANRGSLQGTAAAAEAGAANGNGAGSKNGKGAKAAAQPAASAANADDGASPIISIDDFAKIDLRIAKIVACQAVEGSDKLLQLTLDVGEERTRNVFSGIKSAYRPEQLVGKLTVMVANLAPRKMKFGLSEGMVLAASAADEKAEPGLYILEPHSGAKPGMRVK.

The short motif at 27 to 37 is the 'HIGH' region element; that stretch reads PYANGQIHIGH. Residues Cys-158, Cys-161, Cys-171, and Cys-174 each coordinate Zn(2+). Positions 348–352 match the 'KMSKS' region motif; it reads KMSKS. ATP is bound at residue Lys-351. The region spanning 619 to 725 is the tRNA-binding domain; that stretch reads DFAKIDLRIA…SGAKPGMRVK (107 aa).

This sequence belongs to the class-I aminoacyl-tRNA synthetase family. MetG type 1 subfamily. As to quaternary structure, homodimer. Requires Zn(2+) as cofactor.

The protein localises to the cytoplasm. The enzyme catalyses tRNA(Met) + L-methionine + ATP = L-methionyl-tRNA(Met) + AMP + diphosphate. Functionally, is required not only for elongation of protein synthesis but also for the initiation of all mRNA translation through initiator tRNA(fMet) aminoacylation. The protein is Methionine--tRNA ligase of Burkholderia mallei (strain NCTC 10247).